Reading from the N-terminus, the 429-residue chain is 5-methylthioadenosine/S-adenosylhomocysteine deaminase (429 aa).

Zn(2+) contacts are provided by His-65 and His-67. Substrate contacts are provided by Glu-94 and His-182. Zn(2+) is bound at residue His-209. Substrate-binding residues include Glu-212 and Asp-297. Residue Asp-297 participates in Zn(2+) binding.

Belongs to the metallo-dependent hydrolases superfamily. MTA/SAH deaminase family. Zn(2+) is required as a cofactor.

The catalysed reaction is S-adenosyl-L-homocysteine + H2O + H(+) = S-inosyl-L-homocysteine + NH4(+). It catalyses the reaction S-methyl-5'-thioadenosine + H2O + H(+) = S-methyl-5'-thioinosine + NH4(+). Catalyzes the deamination of 5-methylthioadenosine and S-adenosyl-L-homocysteine into 5-methylthioinosine and S-inosyl-L-homocysteine, respectively. Is also able to deaminate adenosine. This chain is 5-methylthioadenosine/S-adenosylhomocysteine deaminase, found in Clostridium tetani (strain Massachusetts / E88).